A 431-amino-acid polypeptide reads, in one-letter code: tRNA(Ile)-lysidine synthase (431 aa).

Ser26 to Ser31 serves as a coordination point for ATP.

This sequence belongs to the tRNA(Ile)-lysidine synthase family.

The protein resides in the cytoplasm. It carries out the reaction cytidine(34) in tRNA(Ile2) + L-lysine + ATP = lysidine(34) in tRNA(Ile2) + AMP + diphosphate + H(+). Ligates lysine onto the cytidine present at position 34 of the AUA codon-specific tRNA(Ile) that contains the anticodon CAU, in an ATP-dependent manner. Cytidine is converted to lysidine, thus changing the amino acid specificity of the tRNA from methionine to isoleucine. The polypeptide is tRNA(Ile)-lysidine synthase (Wolbachia sp. subsp. Brugia malayi (strain TRS)).